A 99-amino-acid chain; its full sequence is Large ribosomal subunit protein uL23 (99 aa).

The protein belongs to the universal ribosomal protein uL23 family. Part of the 50S ribosomal subunit. Contacts protein L29, and trigger factor when it is bound to the ribosome.

Its function is as follows. One of the early assembly proteins it binds 23S rRNA. One of the proteins that surrounds the polypeptide exit tunnel on the outside of the ribosome. Forms the main docking site for trigger factor binding to the ribosome. This chain is Large ribosomal subunit protein uL23, found in Stutzerimonas stutzeri (strain A1501) (Pseudomonas stutzeri).